The sequence spans 167 residues: Low molecular mass early light-inducible protein HV60, chloroplastic (167 aa).

The N-terminal 33 residues, 1 to 33 (MATMMAMSSFAGAAVLPRGSARSLPALGRRTLV), are a transit peptide targeting the chloroplast. A run of 2 helical transmembrane segments spans residues 101–121 (GQAWFAYTVAMLSMASLVPLL) and 145–165 (FAMIGLVALAATEIITGTPFI).

This sequence belongs to the ELIP/psbS family.

The protein resides in the plastid. Its subcellular location is the chloroplast membrane. In terms of biological role, probably involved in the integration of pigments into the mature pigment-protein complexes. The protein is Low molecular mass early light-inducible protein HV60, chloroplastic of Hordeum vulgare (Barley).